A 138-amino-acid chain; its full sequence is MSSQSFRQIIGLAPSTATITDSTLIIVDAQNEYAQGLLRVQEVDQSRKVIADLLSRYRYMAHVCVSTTARTGAELGYDVLVVRDGVSDRAIPGVEANVLVDVALKEVTDAFGTVIASGEIKGVIYPVIFLYLYIQDLI.

Belongs to the isochorismatase family.

The enzyme catalyses [(1'E)-5'-(3',3'-dimethyloxiran-2'-yl)-3'-hydroxy-3'-methylpent-1'-en-1'-yl]-quinolinone B = yaequinolone C. It participates in secondary metabolite biosynthesis. It functions in the pathway alkaloid biosynthesis. Its pathway is mycotoxin biosynthesis. Isochorismatase-like protein; part of the gene cluster that mediates the biosynthesis of the aspoquinolone mycotoxins. Within the pathway, asqB converts [(1'E)-5'-(3',3'-dimethyloxiran-2'-yl)-3'-hydroxy-3'-methylpent-1'-en-1'-yl]-quinolinone B into yaequinolone C. The first step of the pathway is catalyzed by the nonribosomal peptide synthetase asqK that condenses anthranilic acid and O-methyl-L-tyrosine to produce 4'-methoxycyclopeptin. 4'-methoxycyclopeptin is then converted to 4'-methoxydehydrocyclopeptin by the ketoglutarate-dependent dioxygenase asqJ. AsqJ also converts its first product 4'-methoxydehydrocyclopeptin to 4'-methoxycyclopenin. The following conversion of 4'-methoxycyclopenin into 4'-methoxyviridicatin is catalyzed by the cyclopenase asqI. 4'-methoxyviridicatin is the precursor of quinolone natural products, and is further converted to quinolinone B. The prenyltransferase asqH1 then catalyzes the canonical Friedel-Crafts alkylation of quinolinone B with dimethylallyl cation to yield dimethylallyl quinolone, which is subjected to FAD-dependent dehydrogenation by the FAD-linked oxidoreductase asqF to yield conjugated aryl diene. The delta(3') double bond then serves as the site of the second alkylation with DMAPP catalyzed by the prenyltransferase asqH2 to yield a carbenium ion intermediate, which can be attacked by H(2)O to yield a styrenyl quinolone containing a C3'-hydroxyprenyl chain. The FAD-dependent monooxygenase asqG performs epoxidation of the terminal C7'-C8' olefin. Finally, after dehydratation of the epoxide at C3 by asqC, the quinolone epoxide rearrangement protein asqO catalyzes an enzymatic 3-exo-tet cyclization to yield the cyclopropyl-THF ring system in aspoquinolone. This Emericella nidulans (strain FGSC A4 / ATCC 38163 / CBS 112.46 / NRRL 194 / M139) (Aspergillus nidulans) protein is Isochorismatase-like protein asqB.